The sequence spans 262 residues: Cyclin-dependent kinase inhibitor 1 (262 aa).

The interval 140 to 212 (SDVAEAGSEH…SAQQATRPKI (73 aa)) is disordered. Residues 160–169 (SGRDRERRET) show a composition bias toward basic and acidic residues. A compositionally biased stretch (low complexity) spans 198 to 208 (SAATASAQQAT).

This sequence belongs to the CDI family. ICK/KRP subfamily. Expressed in roots, stems, leaves and apex.

Functionally, regulates the production of endosperm cells, affecting seed filling and embryo development. Regulates endoreduplication of endosperm cells. May play a role in the exit from the mitotic cell cycle during rice grain formation. Inhibitis leaf elongation rates by decreasing cell number, that is partly compensated by increased cell size. May not affect growth rate or cell size of the primary root. The protein is Cyclin-dependent kinase inhibitor 1 (KRP1) of Oryza sativa subsp. japonica (Rice).